The chain runs to 888 residues: Alanine--tRNA ligase (888 aa).

His-564, His-568, Cys-676, and His-680 together coordinate Zn(2+).

The protein belongs to the class-II aminoacyl-tRNA synthetase family. The cofactor is Zn(2+).

It is found in the cytoplasm. It catalyses the reaction tRNA(Ala) + L-alanine + ATP = L-alanyl-tRNA(Ala) + AMP + diphosphate. In terms of biological role, catalyzes the attachment of alanine to tRNA(Ala) in a two-step reaction: alanine is first activated by ATP to form Ala-AMP and then transferred to the acceptor end of tRNA(Ala). Also edits incorrectly charged Ser-tRNA(Ala) and Gly-tRNA(Ala) via its editing domain. The sequence is that of Alanine--tRNA ligase from Bartonella quintana (strain Toulouse) (Rochalimaea quintana).